We begin with the raw amino-acid sequence, 183 residues long: DELTA-miturgitoxin-Cp1a (183 aa).

The signal sequence occupies residues 1-20; sequence MKFSLFFSVFFLAVLHACLS. A propeptide spanning residues 21–47 is cleaved from the precursor; the sequence is ESEIDLEDEEHFMSSDSFLSEIQDESR. The Processing quadruplet motif signature appears at 44–47; it reads DESR. 8 disulfides stabilise this stretch: Cys51-Cys66, Cys58-Cys75, Cys65-Cys88, Cys77-Cys86, Cys115-Cys130, Cys122-Cys139, Cys129-Cys157, and Cys141-Cys155. Domain repeat units follow at residues 51 to 77 and 115 to 141; these read CIER…KCTC and CVPK…QCKC. The 2 X approximate repeats with cysteine pattern C-C-CC-C-C stretch occupies residues 51–141; the sequence is CIERNKECTN…GGIFKYQCKC (91 aa). Positions 164–177 are predicted alpha-helix; that stretch reads QAIEGALRIAKKLI. Trp181 carries the post-translational modification Tryptophan amide.

It belongs to the neurotoxin 19 (CSTX) family. Double-CSTX subfamily. Post-translationally, cleavage of the propeptide depends on the processing quadruplet motif (XXXR, with at least one of X being E). In terms of tissue distribution, expressed by the venom gland.

It is found in the secreted. Its subcellular location is the target cell membrane. In terms of biological role, spider venom toxin that exhibits cytolytic activity by forming an alpha-helix across the membrane. Lethal to insect larvae. Causes instant paralysis and death in the larvae of the flesh fly (S.carnaria) at doses of 20 ug/g, at doses of less than 10 ug/g causes reversible paralysis. Has cytolytic activity against insect Sf9 cells. Causes stable and irreversible depolarization of fly muscle fibers, leading to contracture at higher toxin concentrations. Destabilizes membranes. This Cheiracanthium punctorium (Yellow sac spider) protein is DELTA-miturgitoxin-Cp1a.